Consider the following 110-residue polypeptide: UPF0122 protein lin1916 (110 aa).

The protein belongs to the UPF0122 family.

Might take part in the signal recognition particle (SRP) pathway. This is inferred from the conservation of its genetic proximity to ftsY/ffh. May be a regulatory protein. The sequence is that of UPF0122 protein lin1916 from Listeria innocua serovar 6a (strain ATCC BAA-680 / CLIP 11262).